Consider the following 303-residue polypeptide: D-alanine--D-alanine ligase (303 aa).

The region spanning 100–295 (KQLLRRHGIL…FPALIARLIE (196 aa)) is the ATP-grasp domain. Position 127–180 (127–180 (GLGYPLFVKPNTGGSSLCLSRVTQPEGLAPALEAVFAHCGEAIVEPAIPGVEVT)) interacts with ATP. Mg(2+)-binding residues include Asp-249, Glu-262, and Asn-264.

It belongs to the D-alanine--D-alanine ligase family. Requires Mg(2+) as cofactor. The cofactor is Mn(2+).

The protein resides in the cytoplasm. It catalyses the reaction 2 D-alanine + ATP = D-alanyl-D-alanine + ADP + phosphate + H(+). It functions in the pathway cell wall biogenesis; peptidoglycan biosynthesis. Its function is as follows. Cell wall formation. The sequence is that of D-alanine--D-alanine ligase from Nitratidesulfovibrio vulgaris (strain ATCC 29579 / DSM 644 / CCUG 34227 / NCIMB 8303 / VKM B-1760 / Hildenborough) (Desulfovibrio vulgaris).